The primary structure comprises 554 residues: DDB1- and CUL4-associated factor 11 homolog (554 aa).

Positions 24-52 are disordered; it reads QRMKNRNDSDTDFSDDDEETSGGCPKMTP. The segment covering 33–43 has biased composition (acidic residues); it reads DTDFSDDDEET. 5 WD repeats span residues 245–284, 288–328, 336–375, 414–458, and 461–500; these read QNQC…RIRT, AHED…DGDV, GHRD…CQGG, GHSV…VSRR, and GHQA…EGVI. The segment at 527–554 is disordered; that stretch reads PQRKLRKPISARNAKCPTTSSEPDDFQI.

Belongs to the WD repeat LEC14B family.

Its function is as follows. Involved in regulation of lifespan. Required for dopaminergic CEP neuron degeneration in response to Mn(2+). In Caenorhabditis briggsae, this protein is DDB1- and CUL4-associated factor 11 homolog (wdr-23).